Here is a 383-residue protein sequence, read N- to C-terminus: BRISC and BRCA1-A complex member 2 (383 aa).

N-acetylmethionine is present on Met1. At Ser2 the chain carries Phosphoserine. UEV-like regions lie at residues 30–147 and 275–364; these read DATN…TLLE and IAAF…RAKA.

The protein belongs to the BABAM2 family. Component of the ARISC complex, at least composed of UIMC1/RAP80, ABRAXAS1, BRCC3/BRCC36, BABAM2 and BABAM1/NBA1. Component of the BRCA1-A complex, at least composed of BRCA1, BARD1, UIMC1/RAP80, ABRAXAS1, BRCC3/BRCC36, BABAM2 and BABAM1/NBA1. In the BRCA1-A complex, interacts directly with ABRAXAS1, BRCC3/BRCC36 and BABAM1/NBA1. Binds polyubiquitin. Component of the BRISC complex, at least composed of ABRAXAS2, BRCC3/BRCC36, BABAM2 and BABAM1/NBA1. Identified in a complex with SHMT2 and the other subunits of the BRISC complex. Component of the BRCA1/BRCA2 containing complex (BRCC), which also contains BRCA1, BRCA2, BARD1, BRCC3/BRCC36 and RAD51. BRCC is a ubiquitin E3 ligase complex that enhances cellular survival following DNA damage. May interact with FAS and TNFRSF1A.

It localises to the cytoplasm. Its subcellular location is the nucleus. Component of the BRCA1-A complex, a complex that specifically recognizes 'Lys-63'-linked ubiquitinated histones H2A and H2AX at DNA lesions sites, leading to target the BRCA1-BARD1 heterodimer to sites of DNA damage at double-strand breaks (DSBs). The BRCA1-A complex also possesses deubiquitinase activity that specifically removes 'Lys-63'-linked ubiquitin on histones H2A and H2AX. In the BRCA1-A complex, it acts as an adapter that bridges the interaction between BABAM1/NBA1 and the rest of the complex, thereby being required for the complex integrity and modulating the E3 ubiquitin ligase activity of the BRCA1-BARD1 heterodimer. Component of the BRISC complex, a multiprotein complex that specifically cleaves 'Lys-63'-linked ubiquitin in various substrates. Within the BRISC complex, acts as an adapter that bridges the interaction between BABAM1/NBA1 and the rest of the complex, thereby being required for the complex integrity. The BRISC complex is required for normal mitotic spindle assembly and microtubule attachment to kinetochores via its role in deubiquitinating NUMA1. The BRISC complex plays a role in interferon signaling via its role in the deubiquitination of the interferon receptor IFNAR1; deubiquitination increases IFNAR1 activity by enhancing its stability and cell surface expression. Down-regulates the response to bacterial lipopolysaccharide (LPS) via its role in IFNAR1 deubiquitination. May play a role in homeostasis or cellular differentiation in cells of neural, epithelial and germline origins. May also act as a death receptor-associated anti-apoptotic protein, which inhibits the mitochondrial apoptotic pathway. May regulate TNF-alpha signaling through its interactions with TNFRSF1A; however these effects may be indirect. This is BRISC and BRCA1-A complex member 2 from Rattus norvegicus (Rat).